The following is a 298-amino-acid chain: UDP-N-acetylenolpyruvoylglucosamine reductase (298 aa).

The region spanning 26–191 is the FAD-binding PCMH-type domain; it reads KTGGAADVFV…LDATFSLALE (166 aa). Residue Arg-170 is part of the active site. Ser-220 functions as the Proton donor in the catalytic mechanism. Glu-290 is an active-site residue.

This sequence belongs to the MurB family. FAD serves as cofactor.

It localises to the cytoplasm. The catalysed reaction is UDP-N-acetyl-alpha-D-muramate + NADP(+) = UDP-N-acetyl-3-O-(1-carboxyvinyl)-alpha-D-glucosamine + NADPH + H(+). It participates in cell wall biogenesis; peptidoglycan biosynthesis. Its function is as follows. Cell wall formation. This Listeria monocytogenes serotype 4b (strain CLIP80459) protein is UDP-N-acetylenolpyruvoylglucosamine reductase.